The following is a 474-amino-acid chain: tRNA-2-methylthio-N(6)-dimethylallyladenosine synthase (474 aa).

In terms of domain architecture, MTTase N-terminal spans 21 to 138; it reads ERVYVETQGC…LPQMLARRRS (118 aa). Residues Cys30, Cys67, Cys101, Cys175, Cys179, and Cys182 each coordinate [4Fe-4S] cluster. One can recognise a Radical SAM core domain in the interval 161 to 395; it reads RAEGPTAYVS…ARLHEQQSAA (235 aa). Residues 397–460 form the TRAM domain; sequence RALLGTRQSV…THSLRGRVVS (64 aa).

The protein belongs to the methylthiotransferase family. MiaB subfamily. Monomer. [4Fe-4S] cluster is required as a cofactor.

Its subcellular location is the cytoplasm. The enzyme catalyses N(6)-dimethylallyladenosine(37) in tRNA + (sulfur carrier)-SH + AH2 + 2 S-adenosyl-L-methionine = 2-methylsulfanyl-N(6)-dimethylallyladenosine(37) in tRNA + (sulfur carrier)-H + 5'-deoxyadenosine + L-methionine + A + S-adenosyl-L-homocysteine + 2 H(+). Its function is as follows. Catalyzes the methylthiolation of N6-(dimethylallyl)adenosine (i(6)A), leading to the formation of 2-methylthio-N6-(dimethylallyl)adenosine (ms(2)i(6)A) at position 37 in tRNAs that read codons beginning with uridine. This is tRNA-2-methylthio-N(6)-dimethylallyladenosine synthase from Halorhodospira halophila (strain DSM 244 / SL1) (Ectothiorhodospira halophila (strain DSM 244 / SL1)).